A 136-amino-acid polypeptide reads, in one-letter code: Large ribosomal subunit protein uL16 (136 aa).

This sequence belongs to the universal ribosomal protein uL16 family. As to quaternary structure, part of the 50S ribosomal subunit.

Functionally, binds 23S rRNA and is also seen to make contacts with the A and possibly P site tRNAs. The polypeptide is Large ribosomal subunit protein uL16 (Photobacterium profundum (strain SS9)).